Consider the following 627-residue polypeptide: Transducer protein MpcT (627 aa).

Helical transmembrane passes span 28–48 and 55–75; these read MLTA…LTVF and LIGV…TYLI. HAMP domains follow at residues 78–132 and 192–247; these read ADFV…VASR and EQLR…DTIS. In terms of domain architecture, Methyl-accepting transducer spans 266–502; it reads RVDAVADRSA…DVVGMVEEVA (237 aa). Residues glutamate 310, glutamate 416, and glutamate 507 each carry the glutamate methyl ester (Glu) modification. Disordered stretches follow at residues 505–527 and 557–627; these read SEET…DATD and GTAD…ADSQ. Over residues 580 to 590 the composition is skewed to low complexity; that stretch reads AAAVVDQPQPA.

This sequence belongs to the methyl-accepting chemotaxis (MCP) protein family. Interacts with CheA, CheY and CheW1. In terms of processing, methylated by CheR.

The protein localises to the cell membrane. Its function is as follows. Mediates bacteriorhodopsin- and halorhodopsin-dependent photoresponses by detecting membrane potential changes. Probably transduces the signal to the histidine kinase CheA. This Halobacterium salinarum (strain ATCC 29341 / DSM 671 / R1) protein is Transducer protein MpcT (mpcT).